A 279-amino-acid chain; its full sequence is Thymidylate synthase (279 aa).

133–134 (RR) is a dUMP binding site. The active-site Nucleophile is cysteine 154. DUMP-binding positions include 178-181 (RSND), asparagine 189, and 219-221 (HIY). Aspartate 181 provides a ligand contact to (6R)-5,10-methylene-5,6,7,8-tetrahydrofolate. Alanine 278 is a (6R)-5,10-methylene-5,6,7,8-tetrahydrofolate binding site.

The protein belongs to the thymidylate synthase family. Bacterial-type ThyA subfamily. In terms of assembly, homodimer.

Its subcellular location is the cytoplasm. It carries out the reaction dUMP + (6R)-5,10-methylene-5,6,7,8-tetrahydrofolate = 7,8-dihydrofolate + dTMP. The protein operates within pyrimidine metabolism; dTTP biosynthesis. In terms of biological role, catalyzes the reductive methylation of 2'-deoxyuridine-5'-monophosphate (dUMP) to 2'-deoxythymidine-5'-monophosphate (dTMP) while utilizing 5,10-methylenetetrahydrofolate (mTHF) as the methyl donor and reductant in the reaction, yielding dihydrofolate (DHF) as a by-product. This enzymatic reaction provides an intracellular de novo source of dTMP, an essential precursor for DNA biosynthesis. In Streptococcus suis (strain 05ZYH33), this protein is Thymidylate synthase.